We begin with the raw amino-acid sequence, 90 residues long: Probable Fe(2+)-trafficking protein (90 aa).

This sequence belongs to the Fe(2+)-trafficking protein family.

In terms of biological role, could be a mediator in iron transactions between iron acquisition and iron-requiring processes, such as synthesis and/or repair of Fe-S clusters in biosynthetic enzymes. The polypeptide is Probable Fe(2+)-trafficking protein (Xylella fastidiosa (strain M23)).